The following is a 129-amino-acid chain: Protein Turandot C (129 aa).

The first 21 residues, 1 to 21, serve as a signal peptide directing secretion; it reads MNASISLLCLALLLISPFCLG.

It belongs to the Turandot family.

It localises to the secreted. A humoral factor that may play a role in stress tolerance. In Drosophila melanogaster (Fruit fly), this protein is Protein Turandot C.